The chain runs to 152 residues: MWKEFKEFAMKGNVIDLAIGVIIGGAFGKIVTSLVNDIIMPVIGRLVGKVDFSNLYINLSGQQFNSLQEAQAAGAATINYGLFLNNLINFLIIAFSIFIAIKQINKLKNFTKKKEEVQVEATEKDCPYCCTKIDIKATRCPHCTSVLEEATN.

Helical transmembrane passes span 14–34 (VIDL…VTSL) and 81–101 (GLFL…FIAI).

Belongs to the MscL family. In terms of assembly, homopentamer.

The protein resides in the cell membrane. In terms of biological role, channel that opens in response to stretch forces in the membrane lipid bilayer. May participate in the regulation of osmotic pressure changes within the cell. The protein is Large-conductance mechanosensitive channel of Clostridium perfringens (strain 13 / Type A).